The chain runs to 604 residues: Elongation factor 4 (604 aa).

Positions 7–189 (KRIRNFCIIA…SVVDRVPPPA (183 aa)) constitute a tr-type G domain. GTP-binding positions include 19–24 (DHGKST) and 136–139 (NKID).

It belongs to the TRAFAC class translation factor GTPase superfamily. Classic translation factor GTPase family. LepA subfamily.

It localises to the cell inner membrane. The catalysed reaction is GTP + H2O = GDP + phosphate + H(+). In terms of biological role, required for accurate and efficient protein synthesis under certain stress conditions. May act as a fidelity factor of the translation reaction, by catalyzing a one-codon backward translocation of tRNAs on improperly translocated ribosomes. Back-translocation proceeds from a post-translocation (POST) complex to a pre-translocation (PRE) complex, thus giving elongation factor G a second chance to translocate the tRNAs correctly. Binds to ribosomes in a GTP-dependent manner. The protein is Elongation factor 4 of Synechococcus sp. (strain CC9311).